The sequence spans 535 residues: Triacylglyceride transporter MHAS_02168/C731_2106 (535 aa).

Over 1–18 (MAFPQTPNRLIRPRRTSR) the chain is Cytoplasmic. A helical transmembrane segment spans residues 19 to 39 (GIAISAGGLAVLLGALDTYVV). The Periplasmic portion of the chain corresponds to 40-60 (VSIVTDIMRDVGIAVNQIQRV). A helical membrane pass occupies residues 61–82 (TPIITGYLLGYIAAMPLLGRAS). At 83-86 (DRFG) the chain is on the cytoplasmic side. Residues 87–107 (RKLLIQISLAGFALGSVITAL) form a helical membrane-spanning segment. Residues 108–111 (ATNL) lie on the Periplasmic side of the membrane. The helical transmembrane segment at 112–136 (DVLVAGRVIQGAASGALLPVTLALA) threads the bilayer. Topologically, residues 137 to 145 (ADLWATHKR) are cytoplasmic. A helical transmembrane segment spans residues 146–167 (AAVLGGVGAAQELGAVLGPIYG). The Periplasmic portion of the chain corresponds to 168 to 177 (IFVVWLFHHW). A helical transmembrane segment spans residues 178–198 (QAVFWVNVPLALIAMVLIHIS). Residues 199–212 (LPPRVRTEEPQRVD) are Cytoplasmic-facing. A helical transmembrane segment spans residues 213–230 (VTGGLLLALALGLATIGL). Residues 231-243 (YNAEPDGKQVLPE) lie on the Periplasmic side of the membrane. Residues 244–263 (YGPPLIIGAVIAAVAFLVWE) traverse the membrane as a helical segment. Topologically, residues 264 to 278 (RFARTRLLDPAGVRF) are cytoplasmic. Residues 279–300 (RPFLIALLVSLVTGGALMVTLV) traverse the membrane as a helical segment. Residues 301 to 320 (NVELFGQGVLGLDQDEAVFL) are Periplasmic-facing. 2 consecutive transmembrane segments (helical) span residues 321-343 (LARF…TRVG) and 344-364 (DRAV…LIAQ). Residues 365 to 384 (WPADVLESRHDLGFVSLPTL) lie on the Periplasmic side of the membrane. A beta-hairpin region spans residues 373–382 (RHDLGFVSLP). Residues 385 to 407 (DTDLAIAGFGLGLVIAPLTSAAL) traverse the membrane as a helical segment. Topologically, residues 408 to 415 (RVVPAAQH) are cytoplasmic. Residues 416–440 (GIASAAVVVARMIGMLIGIAALSAW) form a helical membrane-spanning segment. Topologically, residues 441-487 (GLYRFNQYLKEQLAALPPAPADFPGGQMAGQMMRLRTATVQAYVLQY) are periplasmic. The chain crosses the membrane as a helical span at residues 488-507 (GEIFAITAGLCVFGAVLGLF). Residues 508 to 535 (IAGRREHAEESADAVDGVSNARDRAPSA) are Cytoplasmic-facing.

This sequence belongs to the major facilitator superfamily. P55 (TC 2.A.1.3.34) family.

Its subcellular location is the cell inner membrane. Functionally, in association with lipoprotein LprG transports triacylglycerides (TAG) across the inner cell membrane, probably transfering them to lipoprotein LprG in the periplasm. TAG probably regulates lipid metabolism and growth regulation and plays a structural role in the outer membrane. Mutagenesis and molecular modeling suggests TAG (and maybe other lipids) enters the central cavity of the P55 transporter from within the cell inner membrane via clefts on the cytoplasmic face of P55 between TM5-TM8 and TM2-TM11. From there the lipid is probably transferred to the hydrophobic cavity of LprG. The lprG-MHAS_02167/C731_2107 operon complements the vancomycin sensitivity of an M.smegmatis knockout of the same operon. Probably required with LprG for normal surface localization of lipoarabinomannan (LAM). The sequence is that of Triacylglyceride transporter MHAS_02168/C731_2106 from Mycolicibacterium hassiacum (strain DSM 44199 / CIP 105218 / JCM 12690 / 3849) (Mycobacterium hassiacum).